The following is a 258-amino-acid chain: Thiazole synthase (258 aa).

Lys-100 (schiff-base intermediate with DXP) is an active-site residue. Residues Gly-161, 187 to 188, and 209 to 210 contribute to the 1-deoxy-D-xylulose 5-phosphate site; these read AG and NT.

Belongs to the ThiG family. In terms of assembly, homotetramer. Forms heterodimers with either ThiH or ThiS.

It is found in the cytoplasm. The catalysed reaction is [ThiS sulfur-carrier protein]-C-terminal-Gly-aminoethanethioate + 2-iminoacetate + 1-deoxy-D-xylulose 5-phosphate = [ThiS sulfur-carrier protein]-C-terminal Gly-Gly + 2-[(2R,5Z)-2-carboxy-4-methylthiazol-5(2H)-ylidene]ethyl phosphate + 2 H2O + H(+). It functions in the pathway cofactor biosynthesis; thiamine diphosphate biosynthesis. Functionally, catalyzes the rearrangement of 1-deoxy-D-xylulose 5-phosphate (DXP) to produce the thiazole phosphate moiety of thiamine. Sulfur is provided by the thiocarboxylate moiety of the carrier protein ThiS. In vitro, sulfur can be provided by H(2)S. This is Thiazole synthase from Campylobacter jejuni subsp. doylei (strain ATCC BAA-1458 / RM4099 / 269.97).